Here is a 130-residue protein sequence, read N- to C-terminus: Small ribosomal subunit protein uS11 (130 aa).

The protein belongs to the universal ribosomal protein uS11 family. Part of the 30S ribosomal subunit. Interacts with proteins S7 and S18. Binds to IF-3.

Located on the platform of the 30S subunit, it bridges several disparate RNA helices of the 16S rRNA. Forms part of the Shine-Dalgarno cleft in the 70S ribosome. The chain is Small ribosomal subunit protein uS11 from Gluconacetobacter diazotrophicus (strain ATCC 49037 / DSM 5601 / CCUG 37298 / CIP 103539 / LMG 7603 / PAl5).